A 336-amino-acid polypeptide reads, in one-letter code: UbiA prenyltransferase domain-containing protein 1 (336 aa).

Position 2 is an N-acetylalanine (Ala2). The next 8 helical transmembrane spans lie at 81–101, 132–152, 158–178, 186–206, 207–227, 243–265, 275–295, and 313–333; these read LLLG…LVNT, FGVF…YLSA, LALI…GIGF, LVIL…VQVG, SLAI…EAIL, IVTL…LLFV, THCS…FSLE, and LNLL…AGSL.

This sequence belongs to the UbiA prenyltransferase family. In terms of assembly, interacts with HMGCR and SOAT1.

It is found in the endoplasmic reticulum membrane. The protein localises to the golgi apparatus membrane. The protein resides in the mitochondrion membrane. It carries out the reaction menadiol + (2E,6E,10E)-geranylgeranyl diphosphate = menaquinol-4 + diphosphate. It catalyses the reaction all-trans-decaprenyl diphosphate + 4-hydroxybenzoate = 4-hydroxy-3-(all-trans-decaprenyl)benzoate + diphosphate. The protein operates within quinol/quinone metabolism; menaquinone biosynthesis. It functions in the pathway cofactor biosynthesis; ubiquinone biosynthesis. Its function is as follows. Prenyltransferase that mediates the formation of menaquinone-4 (MK-4) and coenzyme Q10. MK-4 is a vitamin K2 isoform required for endothelial cell development. Mediates the conversion of phylloquinone (PK) into MK-4, probably by cleaving the side chain of phylloquinone (PK) to release 2-methyl-1,4-naphthoquinone (menadione; K3) and then prenylating it with geranylgeranyl pyrophosphate (GGPP) to form MK-4. Also plays a role in cardiovascular development independently of MK-4 biosynthesis, by acting as a coenzyme Q10 biosynthetic enzyme: coenzyme Q10, also named ubiquinone, plays an important antioxidant role in the cardiovascular system. Mediates biosynthesis of coenzyme Q10 in the Golgi membrane, leading to protect cardiovascular tissues from NOS3/eNOS-dependent oxidative stress. In Mus musculus (Mouse), this protein is UbiA prenyltransferase domain-containing protein 1 (Ubiad1).